A 204-amino-acid chain; its full sequence is 3-isopropylmalate dehydratase small subunit (204 aa).

It belongs to the LeuD family. LeuD type 1 subfamily. Heterodimer of LeuC and LeuD.

It catalyses the reaction (2R,3S)-3-isopropylmalate = (2S)-2-isopropylmalate. Its pathway is amino-acid biosynthesis; L-leucine biosynthesis; L-leucine from 3-methyl-2-oxobutanoate: step 2/4. Catalyzes the isomerization between 2-isopropylmalate and 3-isopropylmalate, via the formation of 2-isopropylmaleate. The sequence is that of 3-isopropylmalate dehydratase small subunit from Vesicomyosocius okutanii subsp. Calyptogena okutanii (strain HA).